A 476-amino-acid polypeptide reads, in one-letter code: Serine/threonine-protein kinase PBL36 (476 aa).

The Protein kinase domain occupies 126–412; sequence FRPESLLGEG…VEALKPLPNL (287 aa). Residues 132–140 and Lys-164 each bind ATP; that span reads LGEGGFGCV. Position 209 is a phosphotyrosine (Tyr-209). Asp-259 serves as the catalytic Proton acceptor. 2 positions are modified to phosphoserine: Ser-263 and Ser-293. Phosphothreonine occurs at positions 294 and 299. The residue at position 307 (Tyr-307) is a Phosphotyrosine. Residues 431–476 form a disordered region; that stretch reads NGVRTQGGGFVSRNGPPMRSLSSLNLPQASPYRYARQSPKPKGKEP.

It belongs to the protein kinase superfamily. Ser/Thr protein kinase family. In terms of assembly, interacts with SD129. In terms of processing, phosphorylated by SD129 in response to the pathogen-associated molecular pattern (PAMP) 3-OH-C10:0, a medium-chain 3-hydroxy fatty acid.

Its subcellular location is the cell membrane. It carries out the reaction L-seryl-[protein] + ATP = O-phospho-L-seryl-[protein] + ADP + H(+). The enzyme catalyses L-threonyl-[protein] + ATP = O-phospho-L-threonyl-[protein] + ADP + H(+). In terms of biological role, involved in chitin-triggered immune signaling and is required for reactive oxygen species (ROS) production. Acts downstream of SD129 in defense signaling triggered by the pathogen-associated molecular pattern (PAMP) 3-OH-C10:0, a medium-chain 3-hydroxy fatty acid. In Arabidopsis thaliana (Mouse-ear cress), this protein is Serine/threonine-protein kinase PBL36.